A 523-amino-acid chain; its full sequence is tRNA-2-methylthio-N(6)-dimethylallyladenosine synthase (523 aa).

The disordered stretch occupies residues 1 to 26 (MNEKQRLEQTGQIQTASHPADRKSDL). Over residues 8 to 17 (EQTGQIQTAS) the composition is skewed to polar residues. The MTTase N-terminal domain occupies 80-198 (RKFYIRTYGC…LPYILHEAYM (119 aa)). Residues Cys-89, Cys-125, Cys-159, Cys-235, Cys-239, and Cys-242 each contribute to the [4Fe-4S] cluster site. The 231-residue stretch at 221–451 (RKGNIKAWVN…NALVQEIAAK (231 aa)) folds into the Radical SAM core domain. The region spanning 454–517 (KQYEGQVVEV…TWTLTGELAN (64 aa)) is the TRAM domain.

The protein belongs to the methylthiotransferase family. MiaB subfamily. As to quaternary structure, monomer. [4Fe-4S] cluster is required as a cofactor.

The protein resides in the cytoplasm. The enzyme catalyses N(6)-dimethylallyladenosine(37) in tRNA + (sulfur carrier)-SH + AH2 + 2 S-adenosyl-L-methionine = 2-methylsulfanyl-N(6)-dimethylallyladenosine(37) in tRNA + (sulfur carrier)-H + 5'-deoxyadenosine + L-methionine + A + S-adenosyl-L-homocysteine + 2 H(+). In terms of biological role, catalyzes the methylthiolation of N6-(dimethylallyl)adenosine (i(6)A), leading to the formation of 2-methylthio-N6-(dimethylallyl)adenosine (ms(2)i(6)A) at position 37 in tRNAs that read codons beginning with uridine. The chain is tRNA-2-methylthio-N(6)-dimethylallyladenosine synthase from Geobacillus thermodenitrificans (strain NG80-2).